Reading from the N-terminus, the 98-residue chain is MLKMNLQLFAHKKGVGSSRNGRDSNAQRLGVKRGDGQFVTAGNIIVRQRGTKFHPGKNCGLGKDDTLFATIDGYVKFERKDRSRKQVSIYPERQAAQA.

The propeptide occupies 1–9; the sequence is MLKMNLQLF.

Belongs to the bacterial ribosomal protein bL27 family. The N-terminus is cleaved by ribosomal processing cysteine protease Prp.

The protein is Large ribosomal subunit protein bL27 of Desulfitobacterium hafniense (strain DSM 10664 / DCB-2).